A 570-amino-acid polypeptide reads, in one-letter code: PTS system lactose-specific EIICB component (570 aa).

In terms of domain architecture, PTS EIIC type-3 spans 9–410 (IEKGKPFFEK…VVDIIIYYPF (402 aa)). 9 helical membrane passes run 31 to 51 (GFISAMPVILFSSIFLLIAYV), 65 to 85 (AILMKPYNYTMGLVAFLVAGT), 104 to 124 (INFISTMLAAMCGFLFLASDP), 133 to 153 (AFMGTKGLLTAFLSAFVTVIV), 178 to 198 (FKDLIPFSAVIIILYALDLVI), 223 to 243 (GWIGVTIIFGAFALFWFVGIH), 283 to 303 (MFIVTFGGTGATLVVPFMFMW), 340 to 360 (VFFIPFVLAPIVNVWIFKLFV), and 382 to 402 (IIMGTGFGLWSFVLAITLIVV). One can recognise a PTS EIIB type-3 domain in the interval 467 to 570 (QTNVLVLCAG…LDFVQQQFEN (104 aa)). C474 (phosphocysteine intermediate; for EIIB activity) is an active-site residue. At C474 the chain carries Phosphocysteine; by EIIA.

The protein resides in the cell membrane. It catalyses the reaction lactose(out) + N(pros)-phospho-L-histidyl-[protein] = lactose 6-phosphate(in) + L-histidyl-[protein]. The phosphoenolpyruvate-dependent sugar phosphotransferase system (sugar PTS), a major carbohydrate active transport system, catalyzes the phosphorylation of incoming sugar substrates concomitantly with their translocation across the cell membrane. The enzyme II LacEF PTS system is involved in lactose transport. This is PTS system lactose-specific EIICB component from Staphylococcus aureus (strain N315).